The sequence spans 661 residues: Kyphoscoliosis peptidase (661 aa).

Positions 116 to 137 (GDKNGNMRPRQPGGKDAHAYPW) are disordered. Active-site residues include Cys-225, His-267, and Asp-282.

It belongs to the transglutaminase-like superfamily. In terms of assembly, interacts with IGFN1 and FLNC. In terms of tissue distribution, specifically expressed in skeletal and cardiac muscle.

It localises to the cytoplasm. It is found in the cytoskeleton. The protein localises to the myofibril. The protein resides in the sarcomere. Its subcellular location is the z line. In terms of biological role, probable cytoskeleton-associated protease required for normal muscle growth. Involved in function, maturation and stabilization of the neuromuscular junction. May act by cleaving muscle-specific proteins such as FLNC. The sequence is that of Kyphoscoliosis peptidase from Mus musculus (Mouse).